The chain runs to 251 residues: PF03932 family protein CutC (251 aa).

It belongs to the CutC family.

It localises to the cytoplasm. The polypeptide is PF03932 family protein CutC (Agrobacterium fabrum (strain C58 / ATCC 33970) (Agrobacterium tumefaciens (strain C58))).